Reading from the N-terminus, the 652-residue chain is Acetyl-coenzyme A synthetase (652 aa).

Residues 189-192 and T311 contribute to the CoA site; that span reads RGGK. ATP-binding positions include 387–389, 411–416, D500, and R515; these read GEP and DTWWQT. S523 is a binding site for CoA. R526 is a binding site for ATP. Mg(2+)-binding residues include V537, H539, and V542. R584 is a CoA binding site. K609 is subject to N6-acetyllysine.

It belongs to the ATP-dependent AMP-binding enzyme family. Mg(2+) serves as cofactor. Acetylated. Deacetylation by the SIR2-homolog deacetylase activates the enzyme.

It carries out the reaction acetate + ATP + CoA = acetyl-CoA + AMP + diphosphate. Functionally, catalyzes the conversion of acetate into acetyl-CoA (AcCoA), an essential intermediate at the junction of anabolic and catabolic pathways. AcsA undergoes a two-step reaction. In the first half reaction, AcsA combines acetate with ATP to form acetyl-adenylate (AcAMP) intermediate. In the second half reaction, it can then transfer the acetyl group from AcAMP to the sulfhydryl group of CoA, forming the product AcCoA. This is Acetyl-coenzyme A synthetase from Rhizobium rhizogenes (Agrobacterium rhizogenes).